Here is a 489-residue protein sequence, read N- to C-terminus: Probable serine protease EDA2 (489 aa).

Residues 1 to 25 (MSLEFGFILINIFTAIVSFSTLSHA) form the signal peptide. Residues Asn35, Asn51, and Asn162 are each glycosylated (N-linked (GlcNAc...) asparagine). Ser178 acts as the Charge relay system in catalysis. 4 N-linked (GlcNAc...) asparagine glycosylation sites follow: Asn253, Asn293, Asn365, and Asn406. The active-site Charge relay system is the Asp410. Asn419 is a glycosylation site (N-linked (GlcNAc...) asparagine). Catalysis depends on His436, which acts as the Charge relay system. N-linked (GlcNAc...) asparagine glycosylation is present at Asn456.

The protein belongs to the peptidase S28 family.

The protein localises to the secreted. In terms of biological role, may be involved in a proteolytic pathway controlling the nuclear division phase of megagametogenesis. The protein is Probable serine protease EDA2 (EDA2) of Arabidopsis thaliana (Mouse-ear cress).